A 234-amino-acid polypeptide reads, in one-letter code: Peptidyl-prolyl cis-trans isomerase FKBP17-3, chloroplastic (234 aa).

A chloroplast-targeting transit peptide spans 1 to 28 (MATLFTATVPSHHRFVSPSQHPKQSLLS). One can recognise a PPIase FKBP-type domain in the interval 130-228 (GYLVVFDVKG…DYIIEVDTVY (99 aa)).

The protein belongs to the FKBP-type PPIase family.

The protein resides in the plastid. It localises to the chloroplast thylakoid lumen. It carries out the reaction [protein]-peptidylproline (omega=180) = [protein]-peptidylproline (omega=0). In terms of biological role, PPIases accelerate the folding of proteins. It catalyzes the cis-trans isomerization of proline imidic peptide bonds in oligopeptides. In Arabidopsis thaliana (Mouse-ear cress), this protein is Peptidyl-prolyl cis-trans isomerase FKBP17-3, chloroplastic (FKBP17-3).